A 264-amino-acid polypeptide reads, in one-letter code: Thymidylate synthase (264 aa).

Residue arginine 21 participates in dUMP binding. A (6R)-5,10-methylene-5,6,7,8-tetrahydrofolate-binding site is contributed by histidine 51. DUMP is bound at residue 126 to 127; sequence RR. Cysteine 146 (nucleophile) is an active-site residue. DUMP-binding positions include 166 to 169, asparagine 177, and 207 to 209; these read RSAD and HIY. A (6R)-5,10-methylene-5,6,7,8-tetrahydrofolate-binding site is contributed by aspartate 169. Alanine 263 lines the (6R)-5,10-methylene-5,6,7,8-tetrahydrofolate pocket.

Belongs to the thymidylate synthase family. Bacterial-type ThyA subfamily. Homodimer.

Its subcellular location is the cytoplasm. The catalysed reaction is dUMP + (6R)-5,10-methylene-5,6,7,8-tetrahydrofolate = 7,8-dihydrofolate + dTMP. Its pathway is pyrimidine metabolism; dTTP biosynthesis. Its function is as follows. Catalyzes the reductive methylation of 2'-deoxyuridine-5'-monophosphate (dUMP) to 2'-deoxythymidine-5'-monophosphate (dTMP) while utilizing 5,10-methylenetetrahydrofolate (mTHF) as the methyl donor and reductant in the reaction, yielding dihydrofolate (DHF) as a by-product. This enzymatic reaction provides an intracellular de novo source of dTMP, an essential precursor for DNA biosynthesis. This is Thymidylate synthase from Brucella ovis (strain ATCC 25840 / 63/290 / NCTC 10512).